Here is a 313-residue protein sequence, read N- to C-terminus: UDP-glucose 4-epimerase (313 aa).

NAD(+) is bound by residues 11 to 12, 31 to 36, 56 to 57, and 77 to 81; these read FI, DDLSSG, DI, and LAAQI. 2 residues coordinate substrate: Ser-121 and Tyr-146. Residues Tyr-146 and Lys-150 each coordinate NAD(+). Tyr-146 (proton acceptor) is an active-site residue. Substrate contacts are provided by residues Asn-175, 189–190, 204–206, Arg-213, and 271–274; these read VV, KIF, and RLGD.

This sequence belongs to the NAD(P)-dependent epimerase/dehydratase family. In terms of assembly, homodimer. The cofactor is NAD(+).

The enzyme catalyses UDP-alpha-D-glucose = UDP-alpha-D-galactose. It functions in the pathway carbohydrate metabolism; galactose metabolism. In terms of biological role, involved in the metabolism of galactose. Catalyzes the conversion of UDP-galactose (UDP-Gal) to UDP-glucose (UDP-Glc) through a mechanism involving the transient reduction of NAD. This Mycolicibacterium smegmatis (strain ATCC 700084 / mc(2)155) (Mycobacterium smegmatis) protein is UDP-glucose 4-epimerase.